Consider the following 471-residue polypeptide: Argininosuccinate lyase (471 aa).

It belongs to the lyase 1 family. Argininosuccinate lyase subfamily.

It is found in the cytoplasm. It catalyses the reaction 2-(N(omega)-L-arginino)succinate = fumarate + L-arginine. It participates in amino-acid biosynthesis; L-arginine biosynthesis; L-arginine from L-ornithine and carbamoyl phosphate: step 3/3. The polypeptide is Argininosuccinate lyase (Cereibacter sphaeroides (strain ATCC 17023 / DSM 158 / JCM 6121 / CCUG 31486 / LMG 2827 / NBRC 12203 / NCIMB 8253 / ATH 2.4.1.) (Rhodobacter sphaeroides)).